The sequence spans 472 residues: 3-isopropylmalate dehydratase large subunit (472 aa).

[4Fe-4S] cluster contacts are provided by Cys351, Cys412, and Cys415.

This sequence belongs to the aconitase/IPM isomerase family. LeuC type 1 subfamily. As to quaternary structure, heterodimer of LeuC and LeuD. The cofactor is [4Fe-4S] cluster.

It carries out the reaction (2R,3S)-3-isopropylmalate = (2S)-2-isopropylmalate. The protein operates within amino-acid biosynthesis; L-leucine biosynthesis; L-leucine from 3-methyl-2-oxobutanoate: step 2/4. Its function is as follows. Catalyzes the isomerization between 2-isopropylmalate and 3-isopropylmalate, via the formation of 2-isopropylmaleate. This chain is 3-isopropylmalate dehydratase large subunit, found in Marinobacter nauticus (strain ATCC 700491 / DSM 11845 / VT8) (Marinobacter aquaeolei).